We begin with the raw amino-acid sequence, 429 residues long: Citrate synthase, plasmid (429 aa).

Residues histidine 306 and aspartate 364 contribute to the active site.

It belongs to the citrate synthase family.

It catalyses the reaction oxaloacetate + acetyl-CoA + H2O = citrate + CoA + H(+). Its pathway is carbohydrate metabolism; tricarboxylic acid cycle; isocitrate from oxaloacetate: step 1/2. In terms of biological role, the exact function of the plasmid-encoded citrate synthase is not clear, it could help nodulation by allowing the bacteria to use citrate as a chelator of iron and calcium. The protein is Citrate synthase, plasmid (pcsA) of Rhizobium tropici.